Here is a 637-residue protein sequence, read N- to C-terminus: Nucleoside triphosphatase I (637 aa).

Positions 43-205 (FLGLNSMNSI…QMLVNLLRPG (163 aa)) constitute a Helicase ATP-binding domain. 56–63 (QETGVGKT) provides a ligand contact to ATP. Residues 142–145 (DECH) carry the DEXH box motif. Residues 358 to 537 (ELYNYLYEHS…QLYKVFKHSS (180 aa)) form the Helicase C-terminal domain. The segment at 459–526 (DIFILDMTWN…DIIQSKSKEF (68 aa)) is binding to the cap-specific mRNA (nucleoside-2'-O-)-methyltransferase.

Belongs to the helicase family. NPH I subfamily. As to quaternary structure, monomer. Interacts (via C-terminus) with RAP94 (via N-terminus). Interacts with the cap-specific mRNA (nucleoside-2'-O-)-methyltransferase.

The protein localises to the virion. The catalysed reaction is a ribonucleoside 5'-triphosphate + H2O = a ribonucleoside 5'-diphosphate + phosphate + H(+). In terms of biological role, DNA-dependent ATPase required for providing the needed energy to achieve the termination of early transcripts. Acts in concert with the RAP94 subunit of the virion RNA polymerase and the capping enzyme/VTF to catalyze release of UUUUUNU-containing nascent RNA from the elongation complex. NPH-I must bind ssDNA in order to exhibit ATPase activity. The sequence is that of Nucleoside triphosphatase I (NPH1) from Vertebrata (FPV).